The primary structure comprises 59 residues: Sec-independent protein translocase protein TatA 1 (59 aa).

A helical membrane pass occupies residues 3–23 (FPLPWQLILILLVILVIFGAS).

This sequence belongs to the TatA/E family. Forms a complex with TatC.

Its subcellular location is the cell inner membrane. In terms of biological role, part of the twin-arginine translocation (Tat) system that transports large folded proteins containing a characteristic twin-arginine motif in their signal peptide across membranes. TatA could form the protein-conducting channel of the Tat system. The protein is Sec-independent protein translocase protein TatA 1 of Aquifex aeolicus (strain VF5).